We begin with the raw amino-acid sequence, 349 residues long: GMP reductase (349 aa).

108–131 contacts NADP(+); the sequence is LDFFKIKKIFSLSSELKYICIDVA. K(+)-binding residues include Gly181 and Gly183. The active-site Thioimidate intermediate is Cys186. NADP(+) is bound at residue 216–239; the sequence is IISDGGCTVSGDIAKAFGGGADFV.

This sequence belongs to the IMPDH/GMPR family. GuaC type 1 subfamily. As to quaternary structure, homotetramer.

The catalysed reaction is IMP + NH4(+) + NADP(+) = GMP + NADPH + 2 H(+). Catalyzes the irreversible NADPH-dependent deamination of GMP to IMP. It functions in the conversion of nucleobase, nucleoside and nucleotide derivatives of G to A nucleotides, and in maintaining the intracellular balance of A and G nucleotides. In Buchnera aphidicola subsp. Schizaphis graminum (strain Sg), this protein is GMP reductase.